The sequence spans 844 residues: DNA mismatch repair protein MutS (844 aa).

Position 602–609 (602–609 (GPNMSGKS)) interacts with ATP.

The protein belongs to the DNA mismatch repair MutS family.

Functionally, this protein is involved in the repair of mismatches in DNA. It is possible that it carries out the mismatch recognition step. This protein has a weak ATPase activity. This Streptococcus pneumoniae (strain Hungary19A-6) protein is DNA mismatch repair protein MutS.